The primary structure comprises 482 residues: Thymidine phosphorylase (482 aa).

Positions 1–10 (MAALMTPGTG) are excised as a propeptide. The tract at residues 1 to 36 (MAALMTPGTGAPPAPGDFSGEGSQGLPDPSPEPKQL) is disordered. At Thr-6 the chain carries Phosphothreonine. His-116, Arg-202, Ser-217, and Lys-221 together coordinate substrate. R-V-A-A-A-L-X(5,6)-L-G-R repeat units lie at residues 265–279 (RVAAALTAMDKPLGR) and 329–342 (RVAAALDDGSALGR). R-A-L-X-X-A-L-V-L repeat units lie at residues 393-401 (RALPLALVL) and 453-461 (RALQEALVL).

It belongs to the thymidine/pyrimidine-nucleoside phosphorylase family. In terms of assembly, homodimer.

It carries out the reaction thymidine + phosphate = 2-deoxy-alpha-D-ribose 1-phosphate + thymine. Its pathway is pyrimidine metabolism; dTMP biosynthesis via salvage pathway; dTMP from thymine: step 1/2. Its function is as follows. May have a role in maintaining the integrity of the blood vessels. Has growth promoting activity on endothelial cells, angiogenic activity in vivo and chemotactic activity on endothelial cells in vitro. In terms of biological role, catalyzes the reversible phosphorolysis of thymidine. The produced molecules are then utilized as carbon and energy sources or in the rescue of pyrimidine bases for nucleotide synthesis. In Homo sapiens (Human), this protein is Thymidine phosphorylase.